The primary structure comprises 379 residues: Alcohol dehydrogenase class-3 (379 aa).

Position 2 is an N-acetylalanine (Ala-2). Cys-47 serves as a coordination point for Zn(2+). His-48 provides a ligand contact to NAD(+). An alcohol-binding residues include Thr-49 and His-69. Residues His-69, Glu-70, Cys-99, Cys-102, Cys-105, Cys-113, and Cys-177 each coordinate Zn(2+). NAD(+) contacts are provided by residues 202 to 207, Asp-226, Lys-231, Ile-272, 295 to 297, 320 to 322, and Arg-372; these read GLGTVG, VGV, and TAF.

This sequence belongs to the zinc-containing alcohol dehydrogenase family. Class-III subfamily. As to quaternary structure, homodimer. Requires Zn(2+) as cofactor. Ubiquitous.

Its subcellular location is the cytoplasm. It carries out the reaction a primary alcohol + NAD(+) = an aldehyde + NADH + H(+). It catalyses the reaction a secondary alcohol + NAD(+) = a ketone + NADH + H(+). The catalysed reaction is S-(hydroxymethyl)glutathione + NADP(+) = S-formylglutathione + NADPH + H(+). The enzyme catalyses S-(hydroxymethyl)glutathione + NAD(+) = S-formylglutathione + NADH + H(+). It carries out the reaction S-nitrosoglutathione + NADH + H(+) = S-(hydroxysulfenamide)glutathione + NAD(+). With respect to regulation, repressed by thiol-modifying agents N-ethylmaleimide (NEM) and 5,5-dithio-bis-(2-nitrobenzoic acid) (DTNB), as well as by methyl methanethiosulfonate (MMTS) in a dose-dependent manner. Inhibited by hydrogen peroxide H(2)O(2). In terms of biological role, alcohol dehydrogenase catalyzing the reduction of nitrosoglutathione. Can also use long-chain alcohols including cinnamyl alcohol and geraniol, and, to a lower extent, octanol. Plays a central role in formaldehyde detoxification. Not able to use ethanol (EtOH) as substrate. The chain is Alcohol dehydrogenase class-3 from Arabidopsis thaliana (Mouse-ear cress).